We begin with the raw amino-acid sequence, 454 residues long: Tumor necrosis factor receptor superfamily member 1A (454 aa).

The signal sequence occupies residues 1–29; sequence MGLPTVPGLLLSLVLLALLMGIHPSGVTG. Residues 30-212 lie on the Extracellular side of the membrane; that stretch reads LVPSLGDREK…VTNPQDSGTA (183 aa). 4 TNFR-Cys repeats span residues 43-82, 83-125, 126-166, and 167-196; these read LCPQGKYVHSKNNSICCTKCHKGTYLVSDCPSPGRDTVCR, ECEK…DTVC, GCKE…NTVC, and NCHAGFFLRESECVPCSHCKKNEECMKLCL. 12 disulfide bridges follow: Cys-44–Cys-58, Cys-59–Cys-72, Cys-62–Cys-81, Cys-84–Cys-99, Cys-102–Cys-117, Cys-105–Cys-125, Cys-127–Cys-143, Cys-146–Cys-158, Cys-149–Cys-166, Cys-168–Cys-179, Cys-182–Cys-195, and Cys-185–Cys-191. The N-linked (GlcNAc...) asparagine glycan is linked to Asn-54. A glycan (N-linked (GlcNAc...) asparagine) is linked at Asn-151. An N-linked (GlcNAc...) asparagine glycan is attached at Asn-202. A helical transmembrane segment spans residues 213–235; that stretch reads VLLPLVILLGLCLLSFIFISLMC. Residues 236 to 454 lie on the Cytoplasmic side of the membrane; sequence RYPRWRPEVY…APSSTTRLPR (219 aa). An N-SMase activation domain (NSD) region spans residues 339 to 349; the sequence is VQKWEDSAHPQ. The 86-residue stretch at 356–441 folds into the Death domain; the sequence is LAILYAVVDG…GCLENILEAL (86 aa). Residue Arg-376 is glycosylated ((Microbial infection) N-beta-linked (GlcNAc) arginine).

In terms of assembly, binding of TNF to the extracellular domain leads to homotrimerization. The aggregated death domains provide a novel molecular interface that interacts specifically with the death domain of TRADD. Various TRADD-interacting proteins such as TRAFS, RIPK1 and possibly FADD, are recruited to the complex by their association with TRADD. This complex activates at least two distinct signaling cascades, apoptosis and NF-kappa-B signaling. Interacts with BAG4, BABAM2, FEM1B, GRB2, SQSTM1 and TRPC4AP. Interacts with DAB2IP. Interacts directly with NOL3 (via CARD domain); inhibits TNF-signaling pathway. Interacts with SH3RF2, TRADD and RIPK1. SH3RF2 facilitates the recruitment of RIPK1 and TRADD to TNFRSF1A in a TNF-alpha-dependent process. Interacts with PGLYRP1; this interaction is important for cell death induction. Interacts (via death domain) with MADD (via death domain). Post-translationally, (Microbial infection) Glycosylated at Arg-376 by S.typhimurium protein Ssek3: arginine GlcNAcylation prevents homotypic/heterotypic death domain interactions.

It localises to the cell membrane. Its subcellular location is the golgi apparatus membrane. Functionally, receptor for TNFSF2/TNF-alpha and homotrimeric TNFSF1/lymphotoxin-alpha. The adapter molecule FADD recruits caspase-8 to the activated receptor. The resulting death-inducing signaling complex (DISC) performs caspase-8 proteolytic activation which initiates the subsequent cascade of caspases (aspartate-specific cysteine proteases) mediating apoptosis. The chain is Tumor necrosis factor receptor superfamily member 1A (Tnfrsf1a) from Mus musculus (Mouse).